Reading from the N-terminus, the 221-residue chain is Stromal cell-derived factor 2-like protein 1 (221 aa).

Residues 1–28 (MWGASRGRVAGPTLLGLLLALSVRSGGA) form the signal peptide. 3 consecutive MIR domains span residues 33–87 (AGLV…IRGG), 95–150 (GLPV…VRCS), and 151–205 (GQHW…AMEG). The residue at position 215 (Ser-215) is a Phosphoserine. A Prevents secretion from ER motif is present at residues 218-221 (HDEL).

Ubiquitously expressed with high expression in the testis, ovary, uterus, and low expression in heart and skeletal muscle.

It is found in the endoplasmic reticulum lumen. This Mus musculus (Mouse) protein is Stromal cell-derived factor 2-like protein 1 (Sdf2l1).